A 170-amino-acid polypeptide reads, in one-letter code: Cyclic pyranopterin monophosphate synthase (170 aa).

Substrate contacts are provided by residues 89–91 (LCH) and 125–126 (ME). Residue Asp-140 is part of the active site.

The protein belongs to the MoaC family. As to quaternary structure, homohexamer; trimer of dimers.

It catalyses the reaction (8S)-3',8-cyclo-7,8-dihydroguanosine 5'-triphosphate = cyclic pyranopterin phosphate + diphosphate. Its pathway is cofactor biosynthesis; molybdopterin biosynthesis. Catalyzes the conversion of (8S)-3',8-cyclo-7,8-dihydroguanosine 5'-triphosphate to cyclic pyranopterin monophosphate (cPMP). The sequence is that of Cyclic pyranopterin monophosphate synthase from Streptomyces avermitilis (strain ATCC 31267 / DSM 46492 / JCM 5070 / NBRC 14893 / NCIMB 12804 / NRRL 8165 / MA-4680).